The primary structure comprises 284 residues: Pantothenate synthetase (284 aa).

30–37 (MGNLHDGH) contacts ATP. His-37 acts as the Proton donor in catalysis. Gln-61 is a binding site for (R)-pantoate. Gln-61 is a binding site for beta-alanine. 149 to 152 (GEKD) serves as a coordination point for ATP. Gln-155 contacts (R)-pantoate. ATP-binding positions include Val-178 and 186 to 189 (LSSR).

This sequence belongs to the pantothenate synthetase family. In terms of assembly, homodimer.

Its subcellular location is the cytoplasm. It catalyses the reaction (R)-pantoate + beta-alanine + ATP = (R)-pantothenate + AMP + diphosphate + H(+). It participates in cofactor biosynthesis; (R)-pantothenate biosynthesis; (R)-pantothenate from (R)-pantoate and beta-alanine: step 1/1. Its function is as follows. Catalyzes the condensation of pantoate with beta-alanine in an ATP-dependent reaction via a pantoyl-adenylate intermediate. This is Pantothenate synthetase from Erwinia tasmaniensis (strain DSM 17950 / CFBP 7177 / CIP 109463 / NCPPB 4357 / Et1/99).